Here is a 123-residue protein sequence, read N- to C-terminus: Protein Wnt-7b (123 aa).

A lipid anchor (O-palmitoleoyl serine; by PORCN) is attached at Ser1. A disordered linker region spans residues 33–61; that stretch reads VEAVRATRLRQPTFLKIKKPRTYRKPMVT. Cys89 and Cys104 form a disulfide bridge. Asn90 carries an N-linked (GlcNAc...) asparagine glycan.

This sequence belongs to the Wnt family. Palmitoleoylation is required for efficient binding to frizzled receptors. Depalmitoleoylation leads to Wnt signaling pathway inhibition.

Its subcellular location is the secreted. The protein resides in the extracellular space. It is found in the extracellular matrix. Its function is as follows. Ligand for members of the frizzled family of seven transmembrane receptors that functions in the canonical Wnt/beta-catenin signaling pathway. Required for normal fusion of the chorion and the allantois during placenta development. Required for central nervous system (CNS) angiogenesis and blood-brain barrier regulation. The polypeptide is Protein Wnt-7b (WNT-7B) (Alopias vulpinus (Common thresher shark)).